A 427-amino-acid chain; its full sequence is Enolase (427 aa).

Residue glutamine 162 participates in (2R)-2-phosphoglycerate binding. Residue glutamate 204 is the Proton donor of the active site. Mg(2+) contacts are provided by aspartate 241, glutamate 282, and aspartate 309. (2R)-2-phosphoglycerate is bound by residues lysine 334, arginine 363, serine 364, and lysine 385. The Proton acceptor role is filled by lysine 334.

The protein belongs to the enolase family. Mg(2+) is required as a cofactor.

The protein localises to the cytoplasm. Its subcellular location is the secreted. The protein resides in the cell surface. The catalysed reaction is (2R)-2-phosphoglycerate = phosphoenolpyruvate + H2O. It functions in the pathway carbohydrate degradation; glycolysis; pyruvate from D-glyceraldehyde 3-phosphate: step 4/5. In terms of biological role, catalyzes the reversible conversion of 2-phosphoglycerate (2-PG) into phosphoenolpyruvate (PEP). It is essential for the degradation of carbohydrates via glycolysis. The polypeptide is Enolase (Frankia casuarinae (strain DSM 45818 / CECT 9043 / HFP020203 / CcI3)).